The chain runs to 464 residues: Cell division protein FtsA (464 aa).

The tract at residues 392–464 is disordered; sequence EVIETDKDTE…FKKLMKSLFE (73 aa). Residues 416 to 455 show a composition bias toward basic and acidic residues; that stretch reads KKENDEVAPEAPREESYEDRENHLEDEQQTEGKAKEESKF.

The protein belongs to the FtsA/MreB family. As to quaternary structure, self-interacts. Interacts with FtsZ.

It is found in the cell membrane. In terms of biological role, cell division protein that is involved in the assembly of the Z ring. May serve as a membrane anchor for the Z ring. This Staphylococcus epidermidis (strain ATCC 12228 / FDA PCI 1200) protein is Cell division protein FtsA.